The chain runs to 588 residues: uncharacterized protein (588 aa).

This is an uncharacterized protein from Schizosaccharomyces pombe (strain 972 / ATCC 24843) (Fission yeast).